The chain runs to 243 residues: MSGHSKWSTIKRKKGALDAKRNKIFTKLIREITIAAKIGGGDIESNPRLRVAVSKAKVANMPKDNIEKAIKKGIGGNEGVEYFEITYEAYAPYGVALMIKCLTDNKNRTSSDVKSVLAKGGGSLGTPGSVSYMFYRKGLVVYNLEKYLEDEIMEFALEFGAEDILVSNNEAEVITNPDDFDKVLSLLRTKFKEEMAEIALIPENKISLNKEQAEKIILLIEKLEDFDDVQEVIHNLEIPEELS.

It belongs to the TACO1 family.

Its subcellular location is the cytoplasm. The protein is Probable transcriptional regulatory protein BAPKO_0024/BafPKo_0025 of Borreliella afzelii (strain PKo) (Borrelia afzelii).